A 201-amino-acid polypeptide reads, in one-letter code: Glycerol-3-phosphate acyltransferase (201 aa).

Helical transmembrane passes span 5–25, 55–75, 88–108, 118–138, and 164–184; these read LLGALLVAAGYLAGSIPFGVV, KMGVLVLVLDAAKAIVPILVA, WVTAVAVAAFVGHLFPVWLGF, LGIFAVLAPWAALAGLVGYAV, and TYGPRHPISWAGLAIALLIFL.

It belongs to the PlsY family. As to quaternary structure, probably interacts with PlsX.

It localises to the cell inner membrane. The enzyme catalyses an acyl phosphate + sn-glycerol 3-phosphate = a 1-acyl-sn-glycero-3-phosphate + phosphate. It functions in the pathway lipid metabolism; phospholipid metabolism. Catalyzes the transfer of an acyl group from acyl-phosphate (acyl-PO(4)) to glycerol-3-phosphate (G3P) to form lysophosphatidic acid (LPA). This enzyme utilizes acyl-phosphate as fatty acyl donor, but not acyl-CoA or acyl-ACP. The polypeptide is Glycerol-3-phosphate acyltransferase (Anaeromyxobacter sp. (strain K)).